The chain runs to 147 residues: Hemoglobin subunit beta-2 (147 aa).

A Globin domain is found at 3–147 (EWTDSERAII…VVSALGRQYH (145 aa)). 2 residues coordinate heme b: His-64 and His-93.

The protein belongs to the globin family. Hb 3 is a heterotetramer of two alpha-2 and two beta-2 chains. In terms of tissue distribution, red blood cells.

In terms of biological role, involved in oxygen transport from gills to the various peripheral tissues. The polypeptide is Hemoglobin subunit beta-2 (hbb2) (Boreogadus saida (Polar cod)).